A 441-amino-acid polypeptide reads, in one-letter code: Proline--tRNA ligase (441 aa).

It belongs to the class-II aminoacyl-tRNA synthetase family. ProS type 2 subfamily. Homodimer.

It localises to the cytoplasm. It carries out the reaction tRNA(Pro) + L-proline + ATP = L-prolyl-tRNA(Pro) + AMP + diphosphate. In terms of biological role, catalyzes the attachment of proline to tRNA(Pro) in a two-step reaction: proline is first activated by ATP to form Pro-AMP and then transferred to the acceptor end of tRNA(Pro). The protein is Proline--tRNA ligase of Methylorubrum populi (strain ATCC BAA-705 / NCIMB 13946 / BJ001) (Methylobacterium populi).